The primary structure comprises 179 residues: ATP synthase subunit delta (179 aa).

This sequence belongs to the ATPase delta chain family. As to quaternary structure, F-type ATPases have 2 components, F(1) - the catalytic core - and F(0) - the membrane proton channel. F(1) has five subunits: alpha(3), beta(3), gamma(1), delta(1), epsilon(1). F(0) has three main subunits: a(1), b(2) and c(10-14). The alpha and beta chains form an alternating ring which encloses part of the gamma chain. F(1) is attached to F(0) by a central stalk formed by the gamma and epsilon chains, while a peripheral stalk is formed by the delta and b chains.

It is found in the cell inner membrane. F(1)F(0) ATP synthase produces ATP from ADP in the presence of a proton or sodium gradient. F-type ATPases consist of two structural domains, F(1) containing the extramembraneous catalytic core and F(0) containing the membrane proton channel, linked together by a central stalk and a peripheral stalk. During catalysis, ATP synthesis in the catalytic domain of F(1) is coupled via a rotary mechanism of the central stalk subunits to proton translocation. Functionally, this protein is part of the stalk that links CF(0) to CF(1). It either transmits conformational changes from CF(0) to CF(1) or is implicated in proton conduction. This chain is ATP synthase subunit delta, found in Acidithiobacillus ferridurans.